The primary structure comprises 638 residues: Zinc finger protein 143 (638 aa).

Position 1 is an N-acetylmethionine (Met-1). Lys-213 participates in a covalent cross-link: Glycyl lysine isopeptide (Lys-Gly) (interchain with G-Cter in SUMO2). 4 C2H2-type zinc fingers span residues 237–261 (FRCK…ERSH), 267–291 (YQCE…FRTH), 297–321 (YRCS…IRTH), and 327–351 (FKCP…IRTH). Residue Thr-352 is modified to Phosphothreonine. C2H2-type zinc fingers lie at residues 357 to 381 (YYCT…VRIH), 387 to 411 (YVCT…HVVH), and 417 to 440 (YNCN…RTAH). A Glycyl lysine isopeptide (Lys-Gly) (interchain with G-Cter in SUMO2) cross-link involves residue Lys-406.

This sequence belongs to the GLI C2H2-type zinc-finger protein family. As to quaternary structure, interacts with CHD8. Forms a complex with HCFC1 and ZNF143.

It localises to the nucleus. Its function is as follows. Transcriptional activator. Activates the gene for selenocysteine tRNA (tRNAsec). Binds to the SPH motif of small nuclear RNA (snRNA) gene promoters. Participates in efficient U6 RNA polymerase III transcription via its interaction with CHD8. In complex with HCFC1 and ZNF143, regulates the expression of several genes, including AP2S1, ESCO2, OPHN1, RBL1, UBXN8 and ZNF32. The sequence is that of Zinc finger protein 143 (Znf143) from Mus musculus (Mouse).